The primary structure comprises 421 residues: Indole-3-pyruvate monooxygenase YUCCA8 (421 aa).

30–35 (GAGPSG) contributes to the FAD binding site. 201–206 (GCGNSG) provides a ligand contact to NADP(+).

The protein belongs to the FMO family. FAD is required as a cofactor. In terms of tissue distribution, expressed in organs undergoing active growth and cell division.

Its subcellular location is the endoplasmic reticulum. It carries out the reaction indole-3-pyruvate + NADPH + O2 + H(+) = (indol-3-yl)acetate + CO2 + NADP(+) + H2O. In terms of biological role, involved in auxin biosynthesis. Converts the indole-3-pyruvic acid (IPA) produced by the TAA family to indole-3-acetic acid (IAA). Seems not able to use tryptamine (TAM) as substrate. Probably responsible for auxin biosynthesis in leaves and involved in the regulation of lateral leaf growth. Required for maintaining water homeostasis and an appropriate root to shoot ratio. Required for the inhibition of root growth by ethylene in etiolated seedlings. Functions downstream of the ethylene-response transcription factor EIL1. The sequence is that of Indole-3-pyruvate monooxygenase YUCCA8 from Oryza sativa subsp. indica (Rice).